The sequence spans 458 residues: ATP synthase subunit beta (458 aa).

G148–T155 is an ATP binding site.

The protein belongs to the ATPase alpha/beta chains family. In terms of assembly, F-type ATPases have 2 components, CF(1) - the catalytic core - and CF(0) - the membrane proton channel. CF(1) has five subunits: alpha(3), beta(3), gamma(1), delta(1), epsilon(1). CF(0) has three main subunits: a(1), b(2) and c(9-12). The alpha and beta chains form an alternating ring which encloses part of the gamma chain. CF(1) is attached to CF(0) by a central stalk formed by the gamma and epsilon chains, while a peripheral stalk is formed by the delta and b chains.

It is found in the cell inner membrane. The enzyme catalyses ATP + H2O + 4 H(+)(in) = ADP + phosphate + 5 H(+)(out). Its function is as follows. Produces ATP from ADP in the presence of a proton gradient across the membrane. The catalytic sites are hosted primarily by the beta subunits. The protein is ATP synthase subunit beta of Shewanella piezotolerans (strain WP3 / JCM 13877).